The primary structure comprises 139 residues: Putative pre-16S rRNA nuclease (139 aa).

The protein belongs to the YqgF nuclease family.

The protein localises to the cytoplasm. Could be a nuclease involved in processing of the 5'-end of pre-16S rRNA. The sequence is that of Putative pre-16S rRNA nuclease from Caldanaerobacter subterraneus subsp. tengcongensis (strain DSM 15242 / JCM 11007 / NBRC 100824 / MB4) (Thermoanaerobacter tengcongensis).